A 389-amino-acid chain; its full sequence is Formate-dependent phosphoribosylglycinamide formyltransferase (389 aa).

N(1)-(5-phospho-beta-D-ribosyl)glycinamide contacts are provided by residues 12-13 and glutamate 72; that span reads EL. ATP contacts are provided by residues arginine 104, lysine 145, 150–155, 185–188, and glutamate 193; these read SSGKGQ and EEFI. Positions 109-301 constitute an ATP-grasp domain; sequence DLAAKELGLK…EFELHLRAVL (193 aa). The Mg(2+) site is built by glutamate 258 and glutamate 271. Residues aspartate 278, lysine 350, and 357–358 each bind N(1)-(5-phospho-beta-D-ribosyl)glycinamide; that span reads RR.

Belongs to the PurK/PurT family. As to quaternary structure, homodimer.

The catalysed reaction is N(1)-(5-phospho-beta-D-ribosyl)glycinamide + formate + ATP = N(2)-formyl-N(1)-(5-phospho-beta-D-ribosyl)glycinamide + ADP + phosphate + H(+). The protein operates within purine metabolism; IMP biosynthesis via de novo pathway; N(2)-formyl-N(1)-(5-phospho-D-ribosyl)glycinamide from N(1)-(5-phospho-D-ribosyl)glycinamide (formate route): step 1/1. Its function is as follows. Involved in the de novo purine biosynthesis. Catalyzes the transfer of formate to 5-phospho-ribosyl-glycinamide (GAR), producing 5-phospho-ribosyl-N-formylglycinamide (FGAR). Formate is provided by PurU via hydrolysis of 10-formyl-tetrahydrofolate. This Phocaeicola vulgatus (strain ATCC 8482 / DSM 1447 / JCM 5826 / CCUG 4940 / NBRC 14291 / NCTC 11154) (Bacteroides vulgatus) protein is Formate-dependent phosphoribosylglycinamide formyltransferase.